Consider the following 197-residue polypeptide: Probable GTP-binding protein EngB (197 aa).

The 174-residue stretch at 22–195 (GFPEIGLAGR…WQWIEAHTVG (174 aa)) folds into the EngB-type G domain. Residues 30-37 (GRSNVGKS), 57-61 (GKTQT), 75-78 (DVPG), 142-145 (TKSD), and 174-176 (FSA) contribute to the GTP site. 2 residues coordinate Mg(2+): Ser37 and Thr59.

Belongs to the TRAFAC class TrmE-Era-EngA-EngB-Septin-like GTPase superfamily. EngB GTPase family. It depends on Mg(2+) as a cofactor.

Necessary for normal cell division and for the maintenance of normal septation. In Lactiplantibacillus plantarum (strain ATCC BAA-793 / NCIMB 8826 / WCFS1) (Lactobacillus plantarum), this protein is Probable GTP-binding protein EngB.